Reading from the N-terminus, the 87-residue chain is Large ribosomal subunit protein bL27 (87 aa).

The tract at residues 1 to 21 (MAHKKGGGSTRNGRDSASKRL) is disordered.

Belongs to the bacterial ribosomal protein bL27 family.

The polypeptide is Large ribosomal subunit protein bL27 (Amoebophilus asiaticus (strain 5a2)).